Here is a 326-residue protein sequence, read N- to C-terminus: Nicotianamine synthase 2 (326 aa).

Belongs to the nicotianamine synthase (NAS)-like family. In terms of tissue distribution, expressed in roots.

It carries out the reaction 3 S-adenosyl-L-methionine = nicotianamine + 3 S-methyl-5'-thioadenosine + 3 H(+). Its function is as follows. Synthesizes nicotianamine, a polyamine that is the first intermediate in the synthesis of the phytosiderophores of the mugineic acid type found in gramineae which serve as a sensor for the physiological iron status within the plant, and/or might be involved in the transport of iron. This Oryza sativa subsp. indica (Rice) protein is Nicotianamine synthase 2 (NAS2).